Here is a 517-residue protein sequence, read N- to C-terminus: Light-independent protochlorophyllide reductase subunit B (517 aa).

A [4Fe-4S] cluster-binding site is contributed by Asp-36. The active-site Proton donor is the Asp-285. Residue 420–421 (GL) coordinates substrate.

This sequence belongs to the ChlB/BchB/BchZ family. Protochlorophyllide reductase is composed of three subunits; BchL, BchN and BchB. Forms a heterotetramer of two BchB and two BchN subunits. The cofactor is [4Fe-4S] cluster.

It catalyses the reaction chlorophyllide a + oxidized 2[4Fe-4S]-[ferredoxin] + 2 ADP + 2 phosphate = protochlorophyllide a + reduced 2[4Fe-4S]-[ferredoxin] + 2 ATP + 2 H2O. It functions in the pathway porphyrin-containing compound metabolism; bacteriochlorophyll biosynthesis (light-independent). Functionally, component of the dark-operative protochlorophyllide reductase (DPOR) that uses Mg-ATP and reduced ferredoxin to reduce ring D of protochlorophyllide (Pchlide) to form chlorophyllide a (Chlide). This reaction is light-independent. The NB-protein (BchN-BchB) is the catalytic component of the complex. The sequence is that of Light-independent protochlorophyllide reductase subunit B from Bradyrhizobium sp. (strain BTAi1 / ATCC BAA-1182).